The chain runs to 410 residues: Argininosuccinate synthase (410 aa).

ATP contacts are provided by residues 11–19 (AYSGGLDTS) and Ala-37. Residues Tyr-88 and Ser-93 each coordinate L-citrulline. 116–124 (SHGCTGKGN) provides a ligand contact to ATP. L-aspartate-binding residues include Thr-120, Asn-124, and Asp-125. Asn-124 provides a ligand contact to L-citrulline. L-citrulline is bound by residues Arg-128, Ser-181, Ser-190, Glu-269, and Tyr-281.

Belongs to the argininosuccinate synthase family. Type 1 subfamily. As to quaternary structure, homotetramer.

The protein localises to the cytoplasm. The catalysed reaction is L-citrulline + L-aspartate + ATP = 2-(N(omega)-L-arginino)succinate + AMP + diphosphate + H(+). Its pathway is amino-acid biosynthesis; L-arginine biosynthesis; L-arginine from L-ornithine and carbamoyl phosphate: step 2/3. The polypeptide is Argininosuccinate synthase (arg12) (Schizosaccharomyces pombe (strain 972 / ATCC 24843) (Fission yeast)).